We begin with the raw amino-acid sequence, 473 residues long: LETM1 domain-containing protein mdm28, mitochondrial (473 aa).

The transit peptide at 1-73 (MLRNRLFKTP…FYNIGSSRLY (73 aa)) directs the protein to the mitochondrion. Residues 74 to 161 (STETPTPSKV…LTRTLKDIGR (88 aa)) lie on the Mitochondrial intermembrane side of the membrane. Residues 162 to 182 (LVPFSVFVVVPFAELLLPIAV) form a helical membrane-spanning segment. The Mitochondrial matrix portion of the chain corresponds to 183 to 473 (KLFPNLLPST…ESNIPKNERK (291 aa)). The region spanning 205-398 (QLRKTRNEVS…LQDTLASIPD (194 aa)) is the Letm1 RBD domain. A disordered region spans residues 430–473 (EEEAEHVAEHPDLAKKQTEENKATSKPAVSAKSPESNIPKNERK). The span at 434–452 (EHVAEHPDLAKKQTEENKA) shows a compositional bias: basic and acidic residues. Residues 462–473 (SPESNIPKNERK) show a composition bias toward polar residues.

The protein resides in the mitochondrion inner membrane. In terms of biological role, involved in mitochondrial potassium homeostasis through the mitochondrial K(+)/H(+) exchange regulation. The sequence is that of LETM1 domain-containing protein mdm28, mitochondrial (mdm28) from Schizosaccharomyces pombe (strain 972 / ATCC 24843) (Fission yeast).